The primary structure comprises 944 residues: Envelope glycoprotein B (944 aa).

Disordered regions lie at residues 1–37 (MGPP…RPGS) and 68–108 (TDGG…RVTG). The N-terminal stretch at 1-55 (MGPPPPLRRQRLLLPRPSRRRPPARLASGRRSSRPGSSWTWYATLIASLVWYPTV) is a signal peptide. Positions 24 to 37 (ARLASGRRSSRPGS) are enriched in low complexity. At 56–785 (SSTTLEATVV…GGFVSFFTNP (730 aa)) the chain is on the virion surface side. Residues 71-85 (GATGQASGGGGGGAG) are compositionally biased toward gly residues. Polar residues predominate over residues 89 to 99 (PSESPETSADT). N-linked (GlcNAc...) asparagine; by host glycosylation occurs at Asn114. 5 cysteine pairs are disulfide-bonded: Cys125-Cys577, Cys142-Cys533, Cys215-Cys280, Cys372-Cys420, and Cys608-Cys645. Residues 182–188 (SYAYIYT) form an involved in fusion and/or binding to host membrane region. Asn238 is a glycosylation site (N-linked (GlcNAc...) asparagine; by host). Residues 267 to 274 (GSTWLYKE) are involved in fusion and/or binding to host membrane. Residues Asn369, Asn409, Asn414, Asn426, Asn481, Asn485, and Asn620 are each glycosylated (N-linked (GlcNAc...) asparagine; by host). 2 hydrophobic membrane proximal region regions span residues 731-783 (ITSK…SFFT) and 762-782 (LVLG…VSFF). The chain crosses the membrane as a helical span at residues 786–806 (FGSLTLIILVVAVVVIVFLLY). Residues 807–944 (QRQRSAVRQP…RDTGSDSELA (138 aa)) are Intravirion-facing. 2 disordered regions span residues 834 to 878 (TVTT…SATA) and 902 to 944 (REVP…SELA). Residues 931 to 934 (YRRL) carry the Internalization motif motif.

It belongs to the herpesviridae glycoprotein B family. Homotrimer; disulfide-linked. Binds to heparan sulfate proteoglycans. Interacts with gH/gL heterodimer. Post-translationally, a proteolytic cleavage by host furin generates two subunits that remain linked by disulfide bonds.

It is found in the virion membrane. The protein localises to the host cell membrane. It localises to the host endosome membrane. Its subcellular location is the host Golgi apparatus membrane. In terms of biological role, envelope glycoprotein that forms spikes at the surface of virion envelope. Essential for the initial attachment to heparan sulfate moieties of the host cell surface proteoglycans. Involved in fusion of viral and cellular membranes leading to virus entry into the host cell. Following initial binding to its host receptors, membrane fusion is mediated by the fusion machinery composed at least of gB and the heterodimer gH/gL. May be involved in the fusion between the virion envelope and the outer nuclear membrane during virion egress. The chain is Envelope glycoprotein B from Tupaiid herpesvirus (strain 2) (TuHV-2).